The chain runs to 93 residues: Alpha-defensin 23 (93 aa).

The signal sequence occupies residues 1–19 (MKTLVLLSALILLAFQVQA). A propeptide spanning residues 20–58 (DPIQNTDEETKTEEQPGKEDQAVSVSFGDPEGSSLQEES) is cleaved from the precursor. The segment at 24–54 (NTDEETKTEEQPGKEDQAVSVSFGDPEGSSL) is disordered. Positions 27 to 40 (EETKTEEQPGKEDQ) are enriched in basic and acidic residues. Intrachain disulfides connect Cys64–Cys92, Cys66–Cys81, and Cys71–Cys91.

The protein belongs to the alpha-defensin family.

It is found in the secreted. Functionally, may have microbicidal activities. The polypeptide is Alpha-defensin 23 (Defa23) (Mus musculus (Mouse)).